The primary structure comprises 312 residues: Ribosomal protein L11 methyltransferase (312 aa).

Threonine 162, glycine 183, aspartate 205, and asparagine 248 together coordinate S-adenosyl-L-methionine.

It belongs to the methyltransferase superfamily. PrmA family.

Its subcellular location is the cytoplasm. The enzyme catalyses L-lysyl-[protein] + 3 S-adenosyl-L-methionine = N(6),N(6),N(6)-trimethyl-L-lysyl-[protein] + 3 S-adenosyl-L-homocysteine + 3 H(+). In terms of biological role, methylates ribosomal protein L11. The protein is Ribosomal protein L11 methyltransferase of Bacillus cereus (strain B4264).